The chain runs to 88 residues: Class II hydrophobin 1 (88 aa).

A signal peptide spans 1 to 15; the sequence is MKFFIATIFATGALA. Disulfide bonds link C19–C69, C29–C59, C30–C42, and C70–C81.

This sequence belongs to the cerato-ulmin hydrophobin family. In terms of assembly, homodimer. Homodimers further self-assemble to form highly ordered films at water-air interfaces through intermolecular interactions.

The protein localises to the secreted. It localises to the cell wall. In terms of biological role, aerial growth, conidiation, and dispersal of filamentous fungi in the environment rely upon a capability of their secreting small amphipathic proteins called hydrophobins (HPBs) with low sequence identity. Class I can self-assemble into an outermost layer of rodlet bundles on aerial cell surfaces, conferring cellular hydrophobicity that supports fungal growth, development and dispersal; whereas Class II form highly ordered films at water-air interfaces through intermolecular interactions but contribute nothing to the rodlet structure. The polypeptide is Class II hydrophobin 1 (Trichoderma asperellum (strain ATCC 204424 / CBS 433.97 / NBRC 101777)).